We begin with the raw amino-acid sequence, 284 residues long: RNA polymerase sigma factor RpoH (284 aa).

The segment at 54 to 123 (MVLAHLRFVV…IHEFILRNWR (70 aa)) is sigma-70 factor domain-2. The Interaction with polymerase core subunit RpoC signature appears at 78 to 81 (DLIQ). The sigma-70 factor domain-4 stretch occupies residues 229–280 (ALEGLDERSRDILQQRWLSEEKATLHDLAEKYNVSAERIRQLEKNAMSKLKG). The segment at residues 253–272 (LHDLAEKYNVSAERIRQLEK) is a DNA-binding region (H-T-H motif).

It belongs to the sigma-70 factor family. RpoH subfamily. In terms of assembly, interacts with the RNA polymerase core enzyme.

Its subcellular location is the cytoplasm. In terms of biological role, sigma factors are initiation factors that promote the attachment of RNA polymerase to specific initiation sites and are then released. This sigma factor is involved in regulation of expression of heat shock genes. In Pseudomonas aeruginosa (strain ATCC 15692 / DSM 22644 / CIP 104116 / JCM 14847 / LMG 12228 / 1C / PRS 101 / PAO1), this protein is RNA polymerase sigma factor RpoH.